The sequence spans 89 residues: Small ribosomal subunit protein uS14 (89 aa).

The protein belongs to the universal ribosomal protein uS14 family. Part of the 30S ribosomal subunit. Contacts proteins S3 and S10.

In terms of biological role, binds 16S rRNA, required for the assembly of 30S particles and may also be responsible for determining the conformation of the 16S rRNA at the A site. The polypeptide is Small ribosomal subunit protein uS14 (Chlorobium chlorochromatii (strain CaD3)).